Reading from the N-terminus, the 225-residue chain is 3-dehydroquinate dehydratase (225 aa).

Residues Ser6, 30 to 32, and Arg62 contribute to the 3-dehydroquinate site; that span reads EWR. His118 serves as the catalytic Proton donor/acceptor. Lys143 acts as the Schiff-base intermediate with substrate in catalysis. Residues Arg186, Ser205, and Gln209 each coordinate 3-dehydroquinate.

It belongs to the type-I 3-dehydroquinase family. As to quaternary structure, homodimer.

The enzyme catalyses 3-dehydroquinate = 3-dehydroshikimate + H2O. It participates in metabolic intermediate biosynthesis; chorismate biosynthesis; chorismate from D-erythrose 4-phosphate and phosphoenolpyruvate: step 3/7. In terms of biological role, involved in the third step of the chorismate pathway, which leads to the biosynthesis of aromatic amino acids. Catalyzes the cis-dehydration of 3-dehydroquinate (DHQ) and introduces the first double bond of the aromatic ring to yield 3-dehydroshikimate. This is 3-dehydroquinate dehydratase from Streptococcus sanguinis (strain SK36).